The following is a 274-amino-acid chain: Rhamnulose-1-phosphate aldolase (274 aa).

Residue Glu-117 is part of the active site. Residues His-141, His-143, and His-212 each contribute to the Zn(2+) site.

This sequence belongs to the aldolase class II family. RhaD subfamily. In terms of assembly, homotetramer. The cofactor is Zn(2+).

The protein resides in the cytoplasm. It catalyses the reaction L-rhamnulose 1-phosphate = (S)-lactaldehyde + dihydroxyacetone phosphate. It functions in the pathway carbohydrate degradation; L-rhamnose degradation; glycerone phosphate from L-rhamnose: step 3/3. Functionally, catalyzes the reversible cleavage of L-rhamnulose-1-phosphate to dihydroxyacetone phosphate (DHAP) and L-lactaldehyde. This is Rhamnulose-1-phosphate aldolase from Escherichia coli O45:K1 (strain S88 / ExPEC).